The sequence spans 1282 residues: Crescerin-like protein che-12 (1282 aa).

TOG regions lie at residues 33–240 and 268–515; these read DFDT…EHTE and PSLV…MDSF. HEAT repeat units lie at residues 59 to 96, 100 to 137, 162 to 209, 261 to 300, 308 to 345, 349 to 386, 388 to 421, and 424 to 461; these read QKKG…TFGS, YCMC…LKPE, ELHH…FIGN, RLRF…QITP, PHLH…HLKG, AHIQ…NINP, TVGG…TISP, and FNLQ…LLNG. The interval 566–714 is disordered; that stretch reads IQQQGQAEKP…RSFDDRPAKA (149 aa). Low complexity-rich tracts occupy residues 575-592 and 633-644; these read PSFS…HQAQ and SAASNPNSSTSS. Positions 702–712 are enriched in basic and acidic residues; that stretch reads DPPRSFDDRPA. TOG stretches follow at residues 800 to 1022 and 1066 to 1282; these read NMSV…ANVE and TELL…ALIR. HEAT repeat units follow at residues 838–875, 879–917, 919–953, 961–998, 1095–1132, 1177–1214, and 1219–1258; these read DNLK…NLNS, SEME…AATA, KALQ…IQGS, NALS…DPNF, ASDT…SMAK, IEPV…LAYK, and QVEV…LIGE.

This sequence belongs to the Crescerin family. In terms of tissue distribution, detected in a subset of amphid neurons that lack wing- or finger-like ciliary extensions. Likewise, detected in phasmid neurons.

It is found in the cell projection. The protein resides in the cilium. Its subcellular location is the perikaryon. It localises to the dendrite. Its function is as follows. Required for normal structure and function of sensory cilia on amphid neurons, especially for the formation of distal ciliary structures, but is less important for normal assembly of middle and basal ciliary structures. Plays a role in the organization of axoneme microtubule bundles in sensory cilia. Required for normal structure and function of the ASER neuron that mediates attraction to NaCl. Required for normal chemotaxis to NaCl. Required for normal avoidance response to high osmolarity. In contrast, is not required for normal chemotaxis to isoamyl alcohol. Does not play a role in intraflagella transport (IFT). Promotes dauer formation in response to pheromones such as the ascarosides ascr#2, ascr#3, ascr#5, ascr#8 and icas#9. In Caenorhabditis elegans, this protein is Crescerin-like protein che-12.